A 305-amino-acid chain; its full sequence is UDP-3-O-acyl-N-acetylglucosamine deacetylase (305 aa).

Zn(2+) is bound by residues histidine 79, histidine 238, and aspartate 242. Residue histidine 265 is the Proton donor of the active site.

This sequence belongs to the LpxC family. It depends on Zn(2+) as a cofactor.

It carries out the reaction a UDP-3-O-[(3R)-3-hydroxyacyl]-N-acetyl-alpha-D-glucosamine + H2O = a UDP-3-O-[(3R)-3-hydroxyacyl]-alpha-D-glucosamine + acetate. Its pathway is glycolipid biosynthesis; lipid IV(A) biosynthesis; lipid IV(A) from (3R)-3-hydroxytetradecanoyl-[acyl-carrier-protein] and UDP-N-acetyl-alpha-D-glucosamine: step 2/6. Its function is as follows. Catalyzes the hydrolysis of UDP-3-O-myristoyl-N-acetylglucosamine to form UDP-3-O-myristoylglucosamine and acetate, the committed step in lipid A biosynthesis. In Shigella boydii serotype 4 (strain Sb227), this protein is UDP-3-O-acyl-N-acetylglucosamine deacetylase.